The chain runs to 389 residues: Probable acyl-CoA dehydrogenase fadE25 (389 aa).

This sequence belongs to the acyl-CoA dehydrogenase family. Requires FAD as cofactor.

The enzyme catalyses a 2,3-saturated acyl-CoA + A = a 2,3-dehydroacyl-CoA + AH2. This chain is Probable acyl-CoA dehydrogenase fadE25 (fadE25), found in Mycobacterium leprae (strain TN).